The sequence spans 331 residues: tRNA (guanine-N(1)-)-methyltransferase (331 aa).

2 stretches are compositionally biased toward low complexity: residues 77-99 (GSDT…QATR) and 107-134 (AQPG…GRAA). The segment at 77–137 (GSDTTARSGS…PGAGRAASSR (61 aa)) is disordered. Residues G169 and 193-198 (LGDYVL) contribute to the S-adenosyl-L-methionine site. The disordered stretch occupies residues 312 to 331 (WQRCSPAPSEQAPEGARDMA).

It belongs to the RNA methyltransferase TrmD family. As to quaternary structure, homodimer.

It localises to the cytoplasm. It catalyses the reaction guanosine(37) in tRNA + S-adenosyl-L-methionine = N(1)-methylguanosine(37) in tRNA + S-adenosyl-L-homocysteine + H(+). Its function is as follows. Specifically methylates guanosine-37 in various tRNAs. The polypeptide is tRNA (guanine-N(1)-)-methyltransferase (Kocuria rhizophila (strain ATCC 9341 / DSM 348 / NBRC 103217 / DC2201)).